The following is a 256-amino-acid chain: Acetyl-coenzyme A carboxylase carboxyl transferase subunit beta 2 (256 aa).

The CoA carboxyltransferase N-terminal domain maps to 1–256 (MTVKCNKCKE…LAIHAETVSA (256 aa)). Zn(2+) is bound by residues C5, C8, C24, and C27. The C4-type zinc finger occupies 5–27 (CNKCKEEINKEDLEKNYYICPLC).

This sequence belongs to the AccD/PCCB family. Acetyl-CoA carboxylase is a heterohexamer composed of biotin carboxyl carrier protein (AccB), biotin carboxylase (AccC) and two subunits each of ACCase subunit alpha (AccA) and ACCase subunit beta (AccD). Zn(2+) serves as cofactor.

Its subcellular location is the cytoplasm. The catalysed reaction is N(6)-carboxybiotinyl-L-lysyl-[protein] + acetyl-CoA = N(6)-biotinyl-L-lysyl-[protein] + malonyl-CoA. Its pathway is lipid metabolism; malonyl-CoA biosynthesis; malonyl-CoA from acetyl-CoA: step 1/1. Functionally, component of the acetyl coenzyme A carboxylase (ACC) complex. Biotin carboxylase (BC) catalyzes the carboxylation of biotin on its carrier protein (BCCP) and then the CO(2) group is transferred by the transcarboxylase to acetyl-CoA to form malonyl-CoA. The chain is Acetyl-coenzyme A carboxylase carboxyl transferase subunit beta 2 from Lachnospira eligens (strain ATCC 27750 / DSM 3376 / VPI C15-48 / C15-B4) (Eubacterium eligens).